Reading from the N-terminus, the 71-residue chain is UPF0435 protein RBAM_008100 (71 aa).

Belongs to the UPF0435 family.

The chain is UPF0435 protein RBAM_008100 from Bacillus velezensis (strain DSM 23117 / BGSC 10A6 / LMG 26770 / FZB42) (Bacillus amyloliquefaciens subsp. plantarum).